The sequence spans 486 residues: Protein pleiotropic regulatory locus 1 (486 aa).

A disordered region spans residues 62-101 (EPVVSQPPRQPDRINEQPGPSNALSLAAPEGSKSTQKGAT). WD repeat units follow at residues 174 to 204 (GHLGWVRSVAFDPSNEWFCTGSADRTIKIWD), 216 to 246 (GHIEQVRGLAVSNRHTYMFSAGDDKQVKCWD), 258 to 288 (GHLSGVYCLALHPTLDVLLTGGRDSVCRVWD), 300 to 330 (GHDNTVCSVFTRPTDPQVVTGSHDTTIKFWD), 342 to 371 (HHKKSVRAMTLHPKENAFASASADNTKKFS), 384 to 413 (QQKTIINAMAVNEDGVMVTGGDNGSIWFWD), and 433 to 463 (ESEAGIYAACYDNTGSRLVTCEADKTIKMWK). 2 consecutive short sequence motifs (DWD box) follow at residues 275 to 290 (LLTGGRDSVCRVWDIR) and 317 to 332 (VVTGSHDTTIKFWDLR). The interval 465-486 (DENATPETHPINFKPPKEIRRF) is disordered.

This sequence belongs to the WD repeat PRL1/PRL2 family. In terms of assembly, component of the multiprotein assembly MOS4-associated complex (MAC) at least composed of MOS4, CDC5, PRL1 and PRP19. Interacts with CDC5. Component of the CUL4-RBX1-DDB1-PRL1 E3 ubiquitin-protein ligase complex. Interacts with DDB1A through its DWD motif. Interacts with AKIN10, AKIN11 and PIPC. Interacts with KAP2.

The protein localises to the nucleus. It functions in the pathway protein modification; protein ubiquitination. Pleiotropic regulator of glucose, stress and hormone responses. Also regulates cytochrome P450 CYP90A1/CPD. Coordinates the expression of hormone- and stress-related genes and genes related to cell wall modification and growth, leading to altered sugar-dependent growth and developmental responses. Component of the MAC complex that probably regulates defense responses through transcriptional control and thereby is essential for plant innate immunity. By suppressing the expression of several (1)O(2)-responsive genes, PRL1 seems to play a major role in modulating responses of plants to environmental changes by interconnecting (1)O(2)-mediated retrograde signaling with other signaling pathways. Acts as a negative regulator of SNF1-related protein kinases AKIN10 and AKIN11 via the inhibition of their interaction with SKP1/ASK1. Component of the CUL4-RBX1-DDB1-PRL1 E3 ubiquitin-protein ligase complex, PRL1 may function as the substrate recognition module within this complex, leading to the AKIN10 degradation. This is Protein pleiotropic regulatory locus 1 (PRL1) from Arabidopsis thaliana (Mouse-ear cress).